Here is a 308-residue protein sequence, read N- to C-terminus: Coenzyme PQQ synthesis protein B (308 aa).

It belongs to the PqqB family.

It participates in cofactor biosynthesis; pyrroloquinoline quinone biosynthesis. Functionally, may be involved in the transport of PQQ or its precursor to the periplasm. In Rhodopseudomonas palustris (strain TIE-1), this protein is Coenzyme PQQ synthesis protein B.